Here is an 805-residue protein sequence, read N- to C-terminus: Phenylalanine--tRNA ligase beta subunit (805 aa).

Residues 40 to 162 form the tRNA-binding domain; that stretch reads FKNPDYLQLG…NRDEFGDYLS (123 aa). Residues 412–486 form the B5 domain; it reads AFNRKIYLNF…KILDLNKIKE (75 aa). Residues D464, D470, E473, and E474 each coordinate Mg(2+).

The protein belongs to the phenylalanyl-tRNA synthetase beta subunit family. Type 1 subfamily. As to quaternary structure, tetramer of two alpha and two beta subunits. It depends on Mg(2+) as a cofactor.

The protein resides in the cytoplasm. The catalysed reaction is tRNA(Phe) + L-phenylalanine + ATP = L-phenylalanyl-tRNA(Phe) + AMP + diphosphate + H(+). In Mycoplasma pneumoniae (strain ATCC 29342 / M129 / Subtype 1) (Mycoplasmoides pneumoniae), this protein is Phenylalanine--tRNA ligase beta subunit (pheT).